The primary structure comprises 193 residues: Ribosome maturation factor RimM (193 aa).

Residues 97–172 enclose the PRC barrel domain; that stretch reads DDEFYLTDLV…LILADPPALV (76 aa). The interval 168 to 193 is disordered; that stretch reads PPALVGDHEGPEEKGLDENEELGDRD. Basic and acidic residues predominate over residues 173 to 193; it reads GDHEGPEEKGLDENEELGDRD.

The protein belongs to the RimM family. As to quaternary structure, binds ribosomal protein uS19.

It is found in the cytoplasm. Functionally, an accessory protein needed during the final step in the assembly of 30S ribosomal subunit, possibly for assembly of the head region. Essential for efficient processing of 16S rRNA. May be needed both before and after RbfA during the maturation of 16S rRNA. It has affinity for free ribosomal 30S subunits but not for 70S ribosomes. The sequence is that of Ribosome maturation factor RimM from Caulobacter vibrioides (strain ATCC 19089 / CIP 103742 / CB 15) (Caulobacter crescentus).